A 278-amino-acid polypeptide reads, in one-letter code: Large ribosomal subunit protein uL2 (278 aa).

Positions 226 to 278 (NPIDHPHGGGEGRTSGGRHPVTPWGKPTKGKKTRSNKSTDKFILISRHKRKKK) are disordered.

Belongs to the universal ribosomal protein uL2 family. In terms of assembly, part of the 50S ribosomal subunit. Forms a bridge to the 30S subunit in the 70S ribosome.

Functionally, one of the primary rRNA binding proteins. Required for association of the 30S and 50S subunits to form the 70S ribosome, for tRNA binding and peptide bond formation. It has been suggested to have peptidyltransferase activity; this is somewhat controversial. Makes several contacts with the 16S rRNA in the 70S ribosome. This is Large ribosomal subunit protein uL2 from Rhodopseudomonas palustris (strain HaA2).